The sequence spans 504 residues: MPGVEKSSQNESRLLLVSNRLPITIKRSEDGKYDFSMSSGGLVSGLSGLSKTTTFQWYGWPGLEVPEEEIPTLKNRLKEEYNAIPVFIDDELADRHYNGFSNSILWPLFHYHPGEITFDESAWEAYKEANRLFAQAVASQVQDGDLIWVHDYHLMLLPEMLREEIGNTKKNIKIGFFLHTPFPSSEIYRILPVRNELLLGLLHCDLIGFHTYDYTRHFLSACSRLLGLPTTPNGIEFQGKIIACGAFPIGIDPEKFKEGLKKEKVQKRIATLEQKFQGVKLMVGVDRLDYIKGVPQKLHALEVFLSDHPEWVGKVVLVQVAVPSRQDVEEYQNLRAVVNELVGRINGKFGTVEFMPIHFLHKSVNFDELIALYAVSDACVVSSTRDGMNLVSYEYIATQEKRHGSLVLSEFAGAAQSLNGSIIVNPWNTEELAAAYHEAVTMSDEQRALNFSKLDKYVNKYTSAFWGQSFVTELTRISEQAAGKLPTKETPVNGETSKLETSSQ.

D-glucose 6-phosphate is bound by residues Y97 and D151. UDP is bound by residues R287 and K292. Residues R287 and K292 each coordinate UDP-alpha-D-glucose. R325 contributes to the D-glucose 6-phosphate binding site. Residue 386–394 participates in UDP-alpha-D-glucose binding; that stretch reads DGMNLVSYE. 390 to 394 serves as a coordination point for UDP; the sequence is LVSYE. The disordered stretch occupies residues 482 to 504; that stretch reads AGKLPTKETPVNGETSKLETSSQ. Over residues 493–504 the composition is skewed to polar residues; the sequence is NGETSKLETSSQ.

It belongs to the glycosyltransferase 20 family.

It carries out the reaction D-glucose 6-phosphate + UDP-alpha-D-glucose = alpha,alpha-trehalose 6-phosphate + UDP + H(+). It functions in the pathway carbohydrate biosynthesis. Its function is as follows. Synthase catalytic subunit of the trehalose synthase complex that catalyzes the production of trehalose from glucose-6-phosphate and UDP-alpha-D-glucose in a two step process. In Emericella nidulans (strain FGSC A4 / ATCC 38163 / CBS 112.46 / NRRL 194 / M139) (Aspergillus nidulans), this protein is Alpha,alpha-trehalose-phosphate synthase [UDP-forming] (tpsA).